Consider the following 132-residue polypeptide: Small ribosomal subunit protein uS8 (132 aa).

It belongs to the universal ribosomal protein uS8 family. As to quaternary structure, part of the 30S ribosomal subunit. Contacts proteins S5 and S12.

Its function is as follows. One of the primary rRNA binding proteins, it binds directly to 16S rRNA central domain where it helps coordinate assembly of the platform of the 30S subunit. In Ehrlichia chaffeensis (strain ATCC CRL-10679 / Arkansas), this protein is Small ribosomal subunit protein uS8.